Reading from the N-terminus, the 144-residue chain is Peroxisomal membrane protein PEX34 (144 aa).

A run of 3 helical transmembrane segments spans residues 18–30, 52–73, and 109–131; these read NIWS…LDFF, VWLC…KLCK, and TAAL…RLFK.

Homooligomer. Interacts with PEX11, PEX25 and PEX27.

It localises to the peroxisome membrane. Functionally, in concert with the three peroxisome divisional factors, PEX11, PEX25 and PEX27, controls peroxisome morphology and abundance under conditions of peroxisome proliferation. Maintains mature peroxisomes in actively dividing cells. This chain is Peroxisomal membrane protein PEX34 (PEX34), found in Saccharomyces cerevisiae (strain ATCC 204508 / S288c) (Baker's yeast).